A 257-amino-acid chain; its full sequence is MPARRPFIGGNFKCNGSLDFIKSHVAAIAAHKIPDSVDVVIAPSAVHLSTAIAANTSKQLRIAAQNVYLEGNGAWTGETSVEMLQDMGLKHVIVGHSERRRIMGETDEQSAKKAKRALEKGMTVIFCVGETLDERKANRTMEVNIAQLEALGKELGESKMLWKEVVIAYEPVWSIGTGVVATPEQAEEVHVGLRKWFAEKVCAEGAQHIRIIYGGSANGSNCEKLGQCPNIDGFLVGGASLKPEFMTMIDILTKTRT.

Substrate is bound by residues Asn11 and Lys13. The Electrophile role is filled by His96. Glu170 acts as the Proton acceptor in catalysis.

This sequence belongs to the triosephosphate isomerase family. As to quaternary structure, homodimer.

Its subcellular location is the cytoplasm. The enzyme catalyses D-glyceraldehyde 3-phosphate = dihydroxyacetone phosphate. The catalysed reaction is dihydroxyacetone phosphate = methylglyoxal + phosphate. It participates in carbohydrate biosynthesis; gluconeogenesis. It functions in the pathway carbohydrate degradation; glycolysis; D-glyceraldehyde 3-phosphate from glycerone phosphate: step 1/1. In terms of biological role, triosephosphate isomerase is an extremely efficient metabolic enzyme that catalyzes the interconversion between dihydroxyacetone phosphate (DHAP) and D-glyceraldehyde-3-phosphate (G3P) in glycolysis and gluconeogenesis. Functionally, it is also responsible for the non-negligible production of methylglyoxal a reactive cytotoxic side-product that modifies and can alter proteins, DNA and lipids. This Giardia intestinalis (Giardia lamblia) protein is Triosephosphate isomerase.